The chain runs to 314 residues: Ribonuclease Z (314 aa).

Residues His-61, His-63, Asp-65, His-66, His-139, Asp-211, and His-269 each coordinate Zn(2+). Asp-65 acts as the Proton acceptor in catalysis.

The protein belongs to the RNase Z family. Homodimer. The cofactor is Zn(2+).

It catalyses the reaction Endonucleolytic cleavage of RNA, removing extra 3' nucleotides from tRNA precursor, generating 3' termini of tRNAs. A 3'-hydroxy group is left at the tRNA terminus and a 5'-phosphoryl group is left at the trailer molecule.. Functionally, zinc phosphodiesterase, which displays some tRNA 3'-processing endonuclease activity. Probably involved in tRNA maturation, by removing a 3'-trailer from precursor tRNA. This chain is Ribonuclease Z, found in Gemmatimonas aurantiaca (strain DSM 14586 / JCM 11422 / NBRC 100505 / T-27).